A 306-amino-acid chain; its full sequence is tRNA dimethylallyltransferase (306 aa).

An ATP-binding site is contributed by 12 to 19 (GPTAAGKT). Residue 14–19 (TAAGKT) coordinates substrate. 3 interaction with substrate tRNA regions span residues 37 to 40 (DSAL), 161 to 165 (QRINR), and 242 to 247 (RCVGYR).

It belongs to the IPP transferase family. As to quaternary structure, monomer. It depends on Mg(2+) as a cofactor.

The enzyme catalyses adenosine(37) in tRNA + dimethylallyl diphosphate = N(6)-dimethylallyladenosine(37) in tRNA + diphosphate. In terms of biological role, catalyzes the transfer of a dimethylallyl group onto the adenine at position 37 in tRNAs that read codons beginning with uridine, leading to the formation of N6-(dimethylallyl)adenosine (i(6)A). This is tRNA dimethylallyltransferase from Pseudoalteromonas translucida (strain TAC 125).